A 318-amino-acid chain; its full sequence is Taste receptor type 2 member 7 (318 aa).

The Extracellular segment spans residues 1–9 (MTDKVQTTL). Residues 10–30 (LFLAIGEFSVGILGNAFIGLV) form a helical membrane-spanning segment. The Cytoplasmic segment spans residues 31 to 55 (NCMDWVKKRKIASIDLILTSLAISR). The chain crosses the membrane as a helical span at residues 56-76 (ICLLCVILLDCFMLVLYPDVY). Residues 77–94 (ATGKQMRIIDFFWTLTNH) lie on the Extracellular side of the membrane. Residues 95 to 115 (LSIWFATCLSIYYFFKIANFF) traverse the membrane as a helical segment. The Cytoplasmic portion of the chain corresponds to 116–128 (HPLFLWMKWRIDR). A helical membrane pass occupies residues 129–149 (VISWILLGCMVLSVFINLPAT). Residues 150-187 (ENLNADFRRCVKAKRKTNLTWSCRVTKAQHASTKLFLN) lie on the Extracellular side of the membrane. An N-linked (GlcNAc...) asparagine glycan is attached at N167. A helical transmembrane segment spans residues 188–208 (LVTLLPFSVCLMSFFLLILSL). Residues 209 to 235 (WRHIRRMQLSATGCRDPSTEAHVRALK) lie on the Cytoplasmic side of the membrane. Residues 236-256 (AVISFLLLFIAYYLSFLIATS) traverse the membrane as a helical segment. The Extracellular portion of the chain corresponds to 257 to 266 (SYFIPETELA). The chain crosses the membrane as a helical span at residues 267–287 (VIFGEFIALIYPSSHSFILIL). Topologically, residues 288–318 (GNSKLRRASLKVLWTVMSILKGRKFQQHKQI) are cytoplasmic.

The protein belongs to the G-protein coupled receptor T2R family.

It is found in the membrane. Its function is as follows. Gustducin-coupled receptor implicated in the perception of bitter compounds in the oral cavity and the gastrointestinal tract. Signals through PLCB2 and the calcium-regulated cation channel TRPM5. This chain is Taste receptor type 2 member 7 (TAS2R7), found in Macaca mulatta (Rhesus macaque).